Here is a 200-residue protein sequence, read N- to C-terminus: Bombinin-like peptides 3 (200 aa).

Positions 1–16 form a signal peptide, or 18; sequence MNFKYIVAVSILIASA. A phenylalanine amide mark is found at Phe68 and Phe129.

This sequence belongs to the bombinin family. Expressed by the skin glands.

It localises to the secreted. Its function is as follows. Has antimicrobial activity, but no hemolytic activity. Preference on killing Gram-negative non-enteric bacteria. The sequence is that of Bombinin-like peptides 3 from Bombina orientalis (Oriental fire-bellied toad).